Consider the following 308-residue polypeptide: ABC transporter protein AbcA (308 aa).

An ABC transporter domain is found at 6 to 245 (LAVSGVNKSF…YHKLLHMEGD (240 aa)). 58–65 (GHNGAGKS) is an ATP binding site.

This sequence belongs to the ABC transporter superfamily.

Functionally, influences the expression of the surface array protein gene (vapA). May have both regulatory and transport activities. The chain is ABC transporter protein AbcA (abcA) from Aeromonas salmonicida.